The primary structure comprises 571 residues: Glutamate--tRNA ligase (571 aa).

Positions 38 to 48 (PSPTGFMHIGG) match the 'HIGH' region motif. The 'KMSKS' region signature appears at 316–320 (KLSKR). An ATP-binding site is contributed by Lys319.

Belongs to the class-I aminoacyl-tRNA synthetase family. Glutamate--tRNA ligase type 1 subfamily. In terms of assembly, monomer.

It is found in the cytoplasm. The enzyme catalyses tRNA(Glu) + L-glutamate + ATP = L-glutamyl-tRNA(Glu) + AMP + diphosphate. In terms of biological role, catalyzes the attachment of glutamate to tRNA(Glu) in a two-step reaction: glutamate is first activated by ATP to form Glu-AMP and then transferred to the acceptor end of tRNA(Glu). The chain is Glutamate--tRNA ligase from Sorangium cellulosum (strain So ce56) (Polyangium cellulosum (strain So ce56)).